A 1488-amino-acid polypeptide reads, in one-letter code: DNA polymerase alpha catalytic subunit (1488 aa).

3 disordered regions span residues 1–22 (MSESPSEPRAKRQRVDKNGRFA), 79–124 (LRDF…TGKA), and 236–325 (FFSS…ESED). Residues 83-93 (FEDEDEYSDGE) are compositionally biased toward acidic residues. Residues 96 to 103 (RKDSKKKK) carry the Nuclear localization signal motif. Positions 99–113 (SKKKKGVAPNSKKRP) are enriched in basic residues. Position 239 is a phosphoserine (Ser-239). Positions 242 to 258 (IKKEPMPEKTPAKKATE) are enriched in basic and acidic residues. The span at 260–278 (PFSDNEMDFSCLDDDENQF) shows a compositional bias: acidic residues. Residues Ser-262 and Ser-269 each carry the phosphoserine modification. The segment covering 286 to 303 (TEKVSQTKTAAEKTSQSK) has biased composition (polar residues). The segment covering 304 to 325 (VAEKSAPKKETTGSPKESESED) has biased composition (basic and acidic residues). Thr-314 is subject to Phosphothreonine. Phosphoserine is present on Ser-317. Residues 638-758 (DSERALLSWF…DLLEMYEKGE (121 aa)) are contains conserved residues essential for 3' -&gt; 5' exonuclease activities. DNA-binding stretches follow at residues 675–734 (QIVA…CKQV) and 1255–1380 (PTKF…RKKS). The Zn(2+) site is built by Cys-1296, Cys-1299, Cys-1324, Cys-1329, Cys-1362, Cys-1367, Cys-1385, and Cys-1388. Residues 1296–1327 (CVTCKTEQLMASAYRPGPSNSHIAVLQQCAKS) form a CysA-type zinc finger. The short motif at 1362 to 1388 (CDHPDCNFNTRTHSLRKKSHRPLCQKC) is the CysB motif element.

It belongs to the DNA polymerase type-B family. In terms of assembly, component of the alpha DNA polymerase complex (also known as the alpha DNA polymerase-primase complex) consisting of four subunits: the catalytic subunit PolA1, the regulatory subunit PolA2, and the primase complex subunits Prim1 and Prim2 respectively. PolA1 associates with the DNA primase complex before association with PolA2. Interacts with Dpit47; the interaction inhibits the activity of the DNA polymerase and occurs only in proliferating cells but not in quiescent cells. Post-translationally, in embryos, a cleaved form of 130 kDa is produced up to cycle 14 and then disappears. In terms of tissue distribution, expressed in embryos (at protein level).

The protein localises to the nucleus. It carries out the reaction DNA(n) + a 2'-deoxyribonucleoside 5'-triphosphate = DNA(n+1) + diphosphate. With respect to regulation, inhibited by N2-(p-n-butylphenyl) deoxyguanosine 5'-triphosphate and N2-(p-n-butylphenyl) deoxyadenosine 5'-triphosphate. DNA synthesis is not inhibited by fungal toxin alpha-amaitin. The 3'-5' exonuclease activity is inhibited by 10mM dGMP. Catalytic subunit of the DNA polymerase alpha complex (also known as the alpha DNA polymerase-primase complex) which plays an essential role in the initiation of DNA synthesis. During the S phase of the cell cycle, the DNA polymerase alpha complex (composed of a catalytic subunit PolA1, an accessory subunit PolA2 and two primase subunits, the catalytic subunit Prim1 and the regulatory subunit Prim2) is recruited to DNA at the replicative forks. The primase subunit of the polymerase alpha complex initiates DNA synthesis by oligomerising short RNA primers on both leading and lagging strands. These primers are initially extended by the polymerase alpha catalytic subunit and subsequently transferred to polymerase delta and polymerase epsilon for processive synthesis on the lagging and leading strand, respectively. In addition to polymerase activity, exhibits 3' to 5' exonuclease activity. This is DNA polymerase alpha catalytic subunit from Drosophila melanogaster (Fruit fly).